The following is a 295-amino-acid chain: Sperm acrosome membrane-associated protein 1 (295 aa).

The first 29 residues, 1–29 (MSPGGAGCSAGLLLTVGWLLLAGLQSTCG), serve as a signal peptide directing secretion. At 30–220 (INVTAVQDPS…SRPDTDAVLV (191 aa)) the chain is on the extracellular side. The tract at residues 39–71 (SLVSEGENEGEEEAENDSEVENEPQAEAEQDVS) is disordered. The segment covering 44–68 (GENEGEEEAENDSEVENEPQAEAEQ) has biased composition (acidic residues). N-linked (GlcNAc...) asparagine glycosylation occurs at Asn72. Residues 221–241 (FVLTIGVIICIFVIFVLIFII) traverse the membrane as a helical segment. The Cytoplasmic segment spans residues 242–295 (VNWATVKDFWASKASTTEIQSELSSMKYKDSTSLDQSPTEIPGHEDDALSEWNE). Residue Ser256 is modified to Phosphoserine. Residues 263 to 295 (ELSSMKYKDSTSLDQSPTEIPGHEDDALSEWNE) are disordered. The residue at position 269 (Tyr269) is a Phosphotyrosine. Phosphoserine occurs at positions 278 and 291.

In terms of assembly, interacts with CYLC1; the interaction may be relevant for proper acrosome attachment to the nuclear envelope. Post-translationally, N-glycosylated. As to expression, detected in spermatozoa (at protein level).

It is found in the cytoplasmic vesicle. Its subcellular location is the secretory vesicle. It localises to the acrosome inner membrane. Plays a role in acrosome expansion and establishment of normal sperm morphology during spermatogenesis. Important for male fertility. The sequence is that of Sperm acrosome membrane-associated protein 1 from Sus scrofa (Pig).